Reading from the N-terminus, the 429-residue chain is Ribosomal RNA small subunit methyltransferase B (429 aa).

S-adenosyl-L-methionine-binding positions include 254–260, D277, D303, and D322; that span reads CAAPGGK. Catalysis depends on C375, which acts as the Nucleophile.

Belongs to the class I-like SAM-binding methyltransferase superfamily. RsmB/NOP family.

It localises to the cytoplasm. The enzyme catalyses cytidine(967) in 16S rRNA + S-adenosyl-L-methionine = 5-methylcytidine(967) in 16S rRNA + S-adenosyl-L-homocysteine + H(+). Specifically methylates the cytosine at position 967 (m5C967) of 16S rRNA. This Pectobacterium atrosepticum (strain SCRI 1043 / ATCC BAA-672) (Erwinia carotovora subsp. atroseptica) protein is Ribosomal RNA small subunit methyltransferase B.